We begin with the raw amino-acid sequence, 137 residues long: Large ribosomal subunit protein uL16 (137 aa).

It belongs to the universal ribosomal protein uL16 family. Part of the 50S ribosomal subunit.

Functionally, binds 23S rRNA and is also seen to make contacts with the A and possibly P site tRNAs. In Methylococcus capsulatus (strain ATCC 33009 / NCIMB 11132 / Bath), this protein is Large ribosomal subunit protein uL16.